The chain runs to 87 residues: Omega-theraphotoxin-Gr1a (87 aa).

Residues 1 to 24 form the signal peptide; it reads MKAQIFVVVLGLAALSVLCYGSEA. The propeptide occupies 25–49; sequence DESALHEEIFQLLAASDEVPKPQER. Intrachain disulfides connect C51–C65, C58–C70, and C64–C79. Position 85 is a valine amide (V85).

As to expression, expressed by the venom gland.

The protein resides in the secreted. Inhibits P/Q- (Cav2.1/CACNA1A) and N-type (Cav2.2/CACNA1B) voltage-gated calcium channel by modifying voltage-dependent gating. It selectively and reversibly blocks the calcium channels coupled to glutamate release. Also inhibits potassium channels (Kv2.1/KCNB1) with lower affinity. Has also been shown to weakly inhibit Kv11.1/KCNH2/ERG1, Kv1.2/KCNA2, Kv1.3/KCNA3, Nav1.5/SCN5A, Nav1.7/SCN9A and TRPV1. This chain is Omega-theraphotoxin-Gr1a, found in Grammostola rosea (Chilean rose tarantula).